A 264-amino-acid polypeptide reads, in one-letter code: Type III pantothenate kinase (264 aa).

6 to 13 (DSGNSRLK) contacts ATP. Substrate contacts are provided by residues Y92 and 99 to 102 (GADR). The active-site Proton acceptor is D101. ATP is bound at residue T127. T177 is a substrate binding site.

This sequence belongs to the type III pantothenate kinase family. As to quaternary structure, homodimer. NH4(+) serves as cofactor. It depends on K(+) as a cofactor.

The protein localises to the cytoplasm. It catalyses the reaction (R)-pantothenate + ATP = (R)-4'-phosphopantothenate + ADP + H(+). It participates in cofactor biosynthesis; coenzyme A biosynthesis; CoA from (R)-pantothenate: step 1/5. Its function is as follows. Catalyzes the phosphorylation of pantothenate (Pan), the first step in CoA biosynthesis. This Bordetella petrii (strain ATCC BAA-461 / DSM 12804 / CCUG 43448) protein is Type III pantothenate kinase.